The primary structure comprises 426 residues: Glutamate-1-semialdehyde 2,1-aminomutase (426 aa).

Residue Lys-268 is modified to N6-(pyridoxal phosphate)lysine.

The protein belongs to the class-III pyridoxal-phosphate-dependent aminotransferase family. HemL subfamily. Pyridoxal 5'-phosphate serves as cofactor.

It is found in the cytoplasm. The catalysed reaction is (S)-4-amino-5-oxopentanoate = 5-aminolevulinate. The protein operates within porphyrin-containing compound metabolism; protoporphyrin-IX biosynthesis; 5-aminolevulinate from L-glutamyl-tRNA(Glu): step 2/2. This Saccharolobus islandicus (strain Y.N.15.51 / Yellowstone #2) (Sulfolobus islandicus) protein is Glutamate-1-semialdehyde 2,1-aminomutase.